The sequence spans 375 residues: 23S rRNA (uracil(747)-C(5))-methyltransferase RlmC (375 aa).

Residues Cys3, Cys11, Cys14, and Cys87 each coordinate [4Fe-4S] cluster. S-adenosyl-L-methionine contacts are provided by Gln212, Phe241, Glu262, and Asn307. Catalysis depends on Cys334, which acts as the Nucleophile.

This sequence belongs to the class I-like SAM-binding methyltransferase superfamily. RNA M5U methyltransferase family. RlmC subfamily.

The catalysed reaction is uridine(747) in 23S rRNA + S-adenosyl-L-methionine = 5-methyluridine(747) in 23S rRNA + S-adenosyl-L-homocysteine + H(+). Functionally, catalyzes the formation of 5-methyl-uridine at position 747 (m5U747) in 23S rRNA. The chain is 23S rRNA (uracil(747)-C(5))-methyltransferase RlmC from Shigella boydii serotype 18 (strain CDC 3083-94 / BS512).